The sequence spans 119 residues: Protein ELF4-LIKE 2 (119 aa).

The segment at 91–119 (SVDASSEGESTGTLKSDGKANNQKRFRSG) is disordered. The span at 93 to 111 (DASSEGESTGTLKSDGKAN) shows a compositional bias: polar residues.

The protein belongs to the EARLY FLOWERING 4 family. Homodimer.

It localises to the nucleus. Functionally, component of the central CCA1/LHY-TOC1 feedback loop in the circadian clock that promotes clock accuracy and is required for sustained rhythms in the absence of daily light/dark cycles. This chain is Protein ELF4-LIKE 2 (EFL2), found in Arabidopsis thaliana (Mouse-ear cress).